Consider the following 91-residue polypeptide: MEVVPVQIAAATTTTLILPVVIAFAVCILSIVLIILISDFLVYTSVLVLTLLLYLLLWLLLTTPLQFFLLTLCVCYFPAFYIHIYIVQTQQ.

It belongs to the papillomaviridae E5A protein family.

The protein is Probable protein E5A of Homo sapiens (Human).